The sequence spans 336 residues: tRNA(Ile)-lysidine synthase (336 aa).

ATP is bound at residue 40 to 45 (SGGQDS).

It belongs to the tRNA(Ile)-lysidine synthase family.

It is found in the cytoplasm. The enzyme catalyses cytidine(34) in tRNA(Ile2) + L-lysine + ATP = lysidine(34) in tRNA(Ile2) + AMP + diphosphate + H(+). Its function is as follows. Ligates lysine onto the cytidine present at position 34 of the AUA codon-specific tRNA(Ile) that contains the anticodon CAU, in an ATP-dependent manner. Cytidine is converted to lysidine, thus changing the amino acid specificity of the tRNA from methionine to isoleucine. This Prochlorococcus marinus (strain SARG / CCMP1375 / SS120) protein is tRNA(Ile)-lysidine synthase.